Consider the following 205-residue polypeptide: MLRALSRLGAGTPCRPRAPLVLPARGRKTRHDPLAKSKIERVNMPPAVDPAEFFVLMERYQHYRQTVRALRMEFVSEVQRKVHEARAGVLAERKALKDAAEHRELMAWNQAENRRLHELRIARLRQEEREQEQRQALEQARKAEEVQAWAQRKEREVLQLQEEVKNFITRENLEARVEAALDSRKNYNWAITREGLVVRPQRRDS.

The N-terminal 27 residues, Met-1–Arg-27, are a transit peptide targeting the mitochondrion.

It belongs to the mitochondrion-specific ribosomal protein mS26 family. In terms of assembly, component of the mitochondrial small ribosomal subunit (mt-SSU). Mature mammalian 55S mitochondrial ribosomes consist of a small (28S) and a large (39S) subunit. The 28S small subunit contains a 12S ribosomal RNA (12S mt-rRNA) and 30 different proteins. The 39S large subunit contains a 16S rRNA (16S mt-rRNA), a copy of mitochondrial valine transfer RNA (mt-tRNA(Val)), which plays an integral structural role, and 52 different proteins.

Its subcellular location is the mitochondrion. This chain is Small ribosomal subunit protein mS26 (MRPS26), found in Homo sapiens (Human).